Reading from the N-terminus, the 804-residue chain is Phenylalanine--tRNA ligase beta subunit (804 aa).

Positions 40–155 (DRGMKGVVIG…SDAPIGADAI (116 aa)) constitute a tRNA-binding domain. A B5 domain is found at 409–484 (QDSVVVTVTL…RLYGYDRLPA (76 aa)). Mg(2+) is bound by residues D462, D468, E471, and E472. The FDX-ACB domain maps to 710–803 (PRFPSVVRDI…VEKQFGAVLR (94 aa)).

It belongs to the phenylalanyl-tRNA synthetase beta subunit family. Type 1 subfamily. As to quaternary structure, tetramer of two alpha and two beta subunits. Requires Mg(2+) as cofactor.

It is found in the cytoplasm. The catalysed reaction is tRNA(Phe) + L-phenylalanine + ATP = L-phenylalanyl-tRNA(Phe) + AMP + diphosphate + H(+). This is Phenylalanine--tRNA ligase beta subunit from Geobacillus kaustophilus (strain HTA426).